A 96-amino-acid chain; its full sequence is MTSKLAIALLATFMLSAALCEAAVLSRSGTELRCLCINTHSTYFHPRVIKELRVIESGPHCPNTEIMSVKLVNGAEVCLDPKQKWVQKVVELFLKR.

Residues 1-22 form the signal peptide; it reads MTSKLAIALLATFMLSAALCEA. A Citrulline modification is found at Arg-27. 2 disulfides stabilise this stretch: Cys-34–Cys-61 and Cys-36–Cys-78.

This sequence belongs to the intercrine alpha (chemokine CxC) family. In terms of assembly, homodimer. Interacts with TNFAIP6 (via Link domain); this interaction interferes with chemokine binding to glycosaminoglycans. Citrullination at Arg-27 prevents proteolysis, and dampens tissue inflammation, it also enhances leukocytosis, possibly through impaired chemokine clearance from the blood circulation.

It is found in the secreted. Chemotactic factor that mediates inflammatory response by attracting neutrophils, basophils, and T-cells to clear pathogens and protect the host from infection. Also plays an important role in neutrophil activation. Released in response to an inflammatory stimulus, exerts its effect by binding to the G-protein-coupled receptors CXCR1 and CXCR2, primarily found in neutrophils, monocytes and endothelial cells. G-protein heterotrimer (alpha, beta, gamma subunits) constitutively binds to CXCR1/CXCR2 receptor and activation by IL8 leads to beta and gamma subunits release from Galpha (GNAI2 in neutrophils) and activation of several downstream signaling pathways including PI3K and MAPK pathways. This is Interleukin-8 (CXCL8) from Dasypus novemcinctus (Nine-banded armadillo).